Here is a 411-residue protein sequence, read N- to C-terminus: LL-diaminopimelate aminotransferase (411 aa).

Y15 and G42 together coordinate substrate. Pyridoxal 5'-phosphate is bound by residues Y72, 108–109, Y132, N187, Y218, and 246–248; these read SK and SFS. Substrate is bound by residues K109, Y132, and N187. K249 carries the N6-(pyridoxal phosphate)lysine modification. 2 residues coordinate pyridoxal 5'-phosphate: R257 and N292. Positions 292 and 388 each coordinate substrate.

This sequence belongs to the class-I pyridoxal-phosphate-dependent aminotransferase family. LL-diaminopimelate aminotransferase subfamily. As to quaternary structure, homodimer. The cofactor is pyridoxal 5'-phosphate.

The enzyme catalyses (2S,6S)-2,6-diaminopimelate + 2-oxoglutarate = (S)-2,3,4,5-tetrahydrodipicolinate + L-glutamate + H2O + H(+). It functions in the pathway amino-acid biosynthesis; L-lysine biosynthesis via DAP pathway; LL-2,6-diaminopimelate from (S)-tetrahydrodipicolinate (aminotransferase route): step 1/1. Involved in the synthesis of meso-diaminopimelate (m-DAP or DL-DAP), required for both lysine and peptidoglycan biosynthesis. Catalyzes the direct conversion of tetrahydrodipicolinate to LL-diaminopimelate. The sequence is that of LL-diaminopimelate aminotransferase from Trichodesmium erythraeum (strain IMS101).